A 278-amino-acid chain; its full sequence is Release factor glutamine methyltransferase (278 aa).

S-adenosyl-L-methionine is bound by residues 117-121 (GTGSG), aspartate 140, and asparagine 184. A substrate-binding site is contributed by 184–187 (NPPY).

This sequence belongs to the protein N5-glutamine methyltransferase family. PrmC subfamily.

It catalyses the reaction L-glutaminyl-[peptide chain release factor] + S-adenosyl-L-methionine = N(5)-methyl-L-glutaminyl-[peptide chain release factor] + S-adenosyl-L-homocysteine + H(+). Its function is as follows. Methylates the class 1 translation termination release factors RF1/PrfA and RF2/PrfB on the glutamine residue of the universally conserved GGQ motif. This Staphylococcus aureus (strain NCTC 8325 / PS 47) protein is Release factor glutamine methyltransferase.